A 600-amino-acid chain; its full sequence is 1-deoxy-D-xylulose-5-phosphate synthase (600 aa).

Thiamine diphosphate contacts are provided by residues His63 and 104–106; that span reads GHS. Asp135 is a Mg(2+) binding site. Thiamine diphosphate contacts are provided by residues 136-137, Asn164, Tyr271, and Glu352; that span reads GA. Asn164 serves as a coordination point for Mg(2+).

This sequence belongs to the transketolase family. DXPS subfamily. As to quaternary structure, homodimer. The cofactor is Mg(2+). Thiamine diphosphate is required as a cofactor.

It carries out the reaction D-glyceraldehyde 3-phosphate + pyruvate + H(+) = 1-deoxy-D-xylulose 5-phosphate + CO2. The protein operates within metabolic intermediate biosynthesis; 1-deoxy-D-xylulose 5-phosphate biosynthesis; 1-deoxy-D-xylulose 5-phosphate from D-glyceraldehyde 3-phosphate and pyruvate: step 1/1. Functionally, catalyzes the acyloin condensation reaction between C atoms 2 and 3 of pyruvate and glyceraldehyde 3-phosphate to yield 1-deoxy-D-xylulose-5-phosphate (DXP). This chain is 1-deoxy-D-xylulose-5-phosphate synthase, found in Campylobacter fetus subsp. fetus (strain 82-40).